The sequence spans 198 residues: Nucleoside triphosphate pyrophosphatase (198 aa).

Asp72 serves as the catalytic Proton acceptor.

Belongs to the Maf family. A divalent metal cation serves as cofactor.

Its subcellular location is the cytoplasm. It carries out the reaction a ribonucleoside 5'-triphosphate + H2O = a ribonucleoside 5'-phosphate + diphosphate + H(+). The enzyme catalyses a 2'-deoxyribonucleoside 5'-triphosphate + H2O = a 2'-deoxyribonucleoside 5'-phosphate + diphosphate + H(+). In terms of biological role, nucleoside triphosphate pyrophosphatase. May have a dual role in cell division arrest and in preventing the incorporation of modified nucleotides into cellular nucleic acids. The polypeptide is Nucleoside triphosphate pyrophosphatase (Acinetobacter baylyi (strain ATCC 33305 / BD413 / ADP1)).